The primary structure comprises 162 residues: uncharacterized protein (162 aa).

The C2H2-type zinc finger occupies 29–50 (CPFCDYTNADAKVVRKHVKSKH). A disordered region spans residues 60 to 93 (KLESQKSKNNGKKQTGQKKQGKGKKQPKRVRETC). Residues 68-87 (NNGKKQTGQKKQGKGKKQPK) show a composition bias toward basic residues.

It to M.jannaschii MJECS06.

This is an uncharacterized protein from Methanocaldococcus jannaschii (strain ATCC 43067 / DSM 2661 / JAL-1 / JCM 10045 / NBRC 100440) (Methanococcus jannaschii).